The sequence spans 298 residues: Beta-1,3-galactosyltransferase 5 (298 aa).

At 1 to 7 (MAFPKMR) the chain is on the cytoplasmic side. The chain crosses the membrane as a helical; Signal-anchor for type II membrane protein span at residues 8–28 (LMYICLLVLGALCLYFSMYSL). At 29–298 (NPFKEQSFVY…PRTLLDYWQA (270 aa)) the chain is on the lumenal side. Residues Asn130, Asn174, and Asn231 are each glycosylated (N-linked (GlcNAc...) asparagine).

The protein belongs to the glycosyltransferase 31 family.

The protein localises to the golgi apparatus membrane. The enzyme catalyses a globoside Gb4Cer (d18:1(4E)) + UDP-alpha-D-galactose = a globoside GalGb4Cer (d18:1(4E)) + UDP + H(+). Its pathway is protein modification; protein glycosylation. In terms of biological role, catalyzes the transfer of Gal to GlcNAc-based acceptors with a preference for the core3 O-linked glycan GlcNAc(beta1,3)GalNAc structure. Can use glycolipid LC3Cer as an efficient acceptor. The polypeptide is Beta-1,3-galactosyltransferase 5 (B3GALT5) (Gorilla gorilla gorilla (Western lowland gorilla)).